Reading from the N-terminus, the 256-residue chain is uncharacterized protein (256 aa).

The N-terminal stretch at Met-1–Ser-22 is a signal peptide. Cys-23 carries the N-palmitoyl cysteine lipid modification. A lipid anchor (S-diacylglycerol cysteine) is attached at Cys-23.

This sequence belongs to the staphylococcal tandem lipoprotein family.

The protein resides in the cell membrane. This is an uncharacterized protein from Staphylococcus aureus (strain USA300).